A 383-amino-acid chain; its full sequence is Chaperone protein DnaJ (383 aa).

One can recognise a J domain in the interval 5–70 (DYYKTLGVTQ…KKRTAYDQYG (66 aa)). The CR-type zinc-finger motif lies at 137 to 215 (GTIKEIKIPT…CHGNGRIEIS (79 aa)). The Zn(2+) site is built by Cys150, Cys153, Cys167, Cys170, Cys189, Cys192, Cys203, and Cys206. CXXCXGXG motif repeat units follow at residues 150-157 (CPTCYGYG), 167-174 (CPTCRGNG), 189-196 (CPQCHGEG), and 203-210 (CRRCHGNG).

It belongs to the DnaJ family. As to quaternary structure, homodimer. Zn(2+) serves as cofactor.

It localises to the cytoplasm. Participates actively in the response to hyperosmotic and heat shock by preventing the aggregation of stress-denatured proteins and by disaggregating proteins, also in an autonomous, DnaK-independent fashion. Unfolded proteins bind initially to DnaJ; upon interaction with the DnaJ-bound protein, DnaK hydrolyzes its bound ATP, resulting in the formation of a stable complex. GrpE releases ADP from DnaK; ATP binding to DnaK triggers the release of the substrate protein, thus completing the reaction cycle. Several rounds of ATP-dependent interactions between DnaJ, DnaK and GrpE are required for fully efficient folding. Also involved, together with DnaK and GrpE, in the DNA replication of plasmids through activation of initiation proteins. The chain is Chaperone protein DnaJ from Buchnera aphidicola subsp. Baizongia pistaciae (strain Bp).